A 295-amino-acid chain; its full sequence is MLTALNRYWDYLRIERQMSPHTITNYQHQLDATIKILAQQDIHAWTQVTPSVVRFILAESKKQGLKEKSLALRLSALRRFLSFLVQQGELKVNPTTGISAPKQGKHLPKNMDGEQVQQLLANDSKEPIDIRDRAILELMYSSGLRLSELQGLDLNSINTRVREVRVIGKGNKERVVPFGRYASHAIQEWLKVRALFNPKDEALFVSQLGNRISHRAIQKRLETWGIRQGLNSHLNPHKLRHSFATHMLEASSDLRAVQELLGHSNLSTTQIYTHLNFQHLAEVYDQAHPRAKRKK.

A Core-binding (CB) domain is found at 1–85 (MLTALNRYWD…ALRRFLSFLV (85 aa)). A Tyr recombinase domain is found at 106-285 (HLPKNMDGEQ…NFQHLAEVYD (180 aa)). Active-site residues include Arg-145, Lys-169, His-237, Arg-240, and His-263. The active-site O-(3'-phospho-DNA)-tyrosine intermediate is Tyr-272.

Belongs to the 'phage' integrase family. XerC subfamily. Forms a cyclic heterotetrameric complex composed of two molecules of XerC and two molecules of XerD.

The protein resides in the cytoplasm. In terms of biological role, site-specific tyrosine recombinase, which acts by catalyzing the cutting and rejoining of the recombining DNA molecules. The XerC-XerD complex is essential to convert dimers of the bacterial chromosome into monomers to permit their segregation at cell division. It also contributes to the segregational stability of plasmids. This chain is Tyrosine recombinase XerC, found in Haemophilus influenzae (strain PittEE).